The chain runs to 193 residues: Putative manganese efflux pump MntP (193 aa).

6 helical membrane passes run Val6–Cys26, Val39–Leu59, Ile61–Gly81, Leu106–Phe126, Asn132–Phe152, and Trp165–His185.

Belongs to the MntP (TC 9.B.29) family.

It is found in the cell membrane. In terms of biological role, probably functions as a manganese efflux pump. This is Putative manganese efflux pump MntP from Dehalococcoides mccartyi (strain ATCC BAA-2266 / KCTC 15142 / 195) (Dehalococcoides ethenogenes (strain 195)).